Reading from the N-terminus, the 208-residue chain is MKIVEVKHPLVKHKLGLMRENDISTKRFRELASEVGSLLTYEATADLETEKVTIEGWNGPVEIDQIKGKKITVVPILRAGLGMMEGVLENVPSARISVVGMYRNEETLEPVPYFQKLVSNIDERMALIVDPMLATGGSVIATIDLLKKAGCSSIKVLVLVAAPEGIAALEKAHPDVELYTASIDQGLNEHGYIIPGLGDAGDKIFGTK.

5-phospho-alpha-D-ribose 1-diphosphate-binding positions include Arg78, Arg103, and 130 to 138 (DPMLATGGS). Residues Ile193 and 198 to 200 (GDA) contribute to the uracil site. Asp199 contacts 5-phospho-alpha-D-ribose 1-diphosphate.

The protein belongs to the UPRTase family. Mg(2+) serves as cofactor.

The catalysed reaction is UMP + diphosphate = 5-phospho-alpha-D-ribose 1-diphosphate + uracil. Its pathway is pyrimidine metabolism; UMP biosynthesis via salvage pathway; UMP from uracil: step 1/1. Allosterically activated by GTP. Functionally, catalyzes the conversion of uracil and 5-phospho-alpha-D-ribose 1-diphosphate (PRPP) to UMP and diphosphate. This chain is Uracil phosphoribosyltransferase, found in Salmonella agona (strain SL483).